Reading from the N-terminus, the 427-residue chain is Serine--tRNA ligase (427 aa).

230–232 contributes to the L-serine binding site; the sequence is TAE. 261–263 contacts ATP; sequence RAE. Glu284 is an L-serine binding site. Position 348–351 (348–351) interacts with ATP; that stretch reads EISS. Ser384 contacts L-serine.

The protein belongs to the class-II aminoacyl-tRNA synthetase family. Type-1 seryl-tRNA synthetase subfamily. In terms of assembly, homodimer. The tRNA molecule binds across the dimer.

It is found in the cytoplasm. The enzyme catalyses tRNA(Ser) + L-serine + ATP = L-seryl-tRNA(Ser) + AMP + diphosphate + H(+). The catalysed reaction is tRNA(Sec) + L-serine + ATP = L-seryl-tRNA(Sec) + AMP + diphosphate + H(+). It participates in aminoacyl-tRNA biosynthesis; selenocysteinyl-tRNA(Sec) biosynthesis; L-seryl-tRNA(Sec) from L-serine and tRNA(Sec): step 1/1. Catalyzes the attachment of serine to tRNA(Ser). Is also able to aminoacylate tRNA(Sec) with serine, to form the misacylated tRNA L-seryl-tRNA(Sec), which will be further converted into selenocysteinyl-tRNA(Sec). This is Serine--tRNA ligase from Moorella thermoacetica (strain ATCC 39073 / JCM 9320).